We begin with the raw amino-acid sequence, 74 residues long: U3-agatoxin-Ao1b (74 aa).

A signal peptide spans 1–20; the sequence is MKAAISLIIFFAILFVVIEA. Residues 21–34 constitute a propeptide that is removed on maturation; that stretch reads ISYEEGKELFQKER. Cystine bridges form between cysteine 37/cysteine 53, cysteine 44/cysteine 58, cysteine 52/cysteine 68, and cysteine 60/cysteine 66. Serine amide is present on serine 72.

Belongs to the neurotoxin 07 (Beta/delta-agtx) family. 02 (aga-3) subfamily. As to expression, expressed by the venom gland.

It is found in the secreted. Functionally, insecticidal neurotoxin that induces an irreversible spastic paralysis when injected into insects. Modifies presynaptic voltage-gated sodium channels (Nav), causing them to open at the normal resting potential of the nerve. This leads to spontaneous release of neurotransmitter and repetitive action potentials in motor neurons. In Agelena orientalis (Funnel-web spider), this protein is U3-agatoxin-Ao1b.